We begin with the raw amino-acid sequence, 91 residues long: Small ribosomal subunit protein bS16 (91 aa).

It belongs to the bacterial ribosomal protein bS16 family.

The polypeptide is Small ribosomal subunit protein bS16 (Staphylococcus haemolyticus (strain JCSC1435)).